The sequence spans 284 residues: Alpha-S1-casein (284 aa).

The N-terminal stretch at Met1–Ala15 is a signal peptide. Disordered stretches follow at residues Arg21 to Gln44 and Ser78 to Glu111. Low complexity-rich tracts occupy residues Ala24–Ser36 and Ser78–Ser99. Phosphoserine is present on residues Ser79, Ser93, Ser94, Ser95, Ser96, Ser97, Ser98, and Ser99. 10 consecutive repeat copies span residues Leu138 to Ser143, Leu144 to Ser149, Leu150 to Ser155, Leu156 to Leu161, Leu162 to Ser167, Leu168 to Ala173, Leu174 to Ser179, Leu180 to Ser185, Leu186 to Ser191, and Leu192 to His197. Residues Leu138 to His197 form a 10 X 6 AA tandem repeats region.

This sequence belongs to the alpha-casein family. As to expression, mammary gland specific. Secreted in milk.

The protein resides in the secreted. Functionally, important role in the capacity of milk to transport calcium phosphate. The sequence is that of Alpha-S1-casein (Csn1s1) from Rattus norvegicus (Rat).